We begin with the raw amino-acid sequence, 231 residues long: UPF0749 protein YlxW (231 aa).

An N-terminal signal peptide occupies residues 1-34; that stretch reads MRGKSAVLLSLIMLIAGFLISFSFQMTKENNKSA. Residues 44–94 are a coiled coil; it reads YALRDELLKQEKENKKFEKELYQKQNKVRQAENKLKKEKSEYYNVLEDTEK.

This sequence belongs to the UPF0749 family.

Its function is as follows. May be involved in cell division and sporulation. The sequence is that of UPF0749 protein YlxW (ylxW) from Bacillus subtilis (strain 168).